The chain runs to 593 residues: CTD kinase subunit alpha (593 aa).

2 stretches are compositionally biased toward polar residues: residues 1-17 (MSYS…TEPN) and 29-51 (QLSG…FKNN). Positions 1–262 (MSYSKSTIYR…ESVPAPLPSP (262 aa)) are disordered. Residues serine 56 and serine 58 each carry the phosphoserine modification. A compositionally biased stretch (basic residues) spans 90–103 (RSRKSRRRKGKKAF). 2 positions are modified to phosphoserine: serine 104 and serine 109. Low complexity predominate over residues 139 to 152 (SSSSASVSPISPSA). The span at 160–170 (QASSFRRSPPS) shows a compositional bias: polar residues. Over residues 198–215 (IPHETTSSDTQKKSSVSS) the composition is skewed to low complexity. The region spanning 277-561 (YEKIDQIGEG…AHETLMHEYF (285 aa)) is the Protein kinase domain. ATP is bound by residues 283–291 (IGEGTYGKV) and lysine 306. Aspartate 399 acts as the Proton acceptor in catalysis.

It belongs to the protein kinase superfamily. CMGC Ser/Thr protein kinase family. CDC2/CDKX subfamily. In terms of assembly, CTDK-I consists of three subunits, ctk1/lsk1, ctk2/lsc1 and ctk3 (also called alpha, beta and gamma). Interacts with ctk2/lsc1. This interaction is dependent on kinase activity.

The protein localises to the nucleus. It localises to the nucleolus. It carries out the reaction [DNA-directed RNA polymerase] + ATP = phospho-[DNA-directed RNA polymerase] + ADP + H(+). Catalytic subunit of the CTDK-I complex, which hyperphosphorylates the C-terminal heptapeptide repeat domain (CTD) of the largest RNA polymerase II subunit. Involved in RNA polymerase II transcriptional elongation and pre-mRNA 3'-end processing. Together with ctk2/lsc1, required for the regulation of cytokinesis by phosphorylating 'Ser-2' residues found in the heptad repeats of the CTD. Required for nuclear localization of ctk2/lsc1. Positively regulates the septation initiation network (SIN) and promotes successful completion of cytokinesis in response to perturbation of the actomyosin ring. Acts in parallel to clp1 to promote actomyosin ring stability upon cytokinesis checkpoint activation. In Schizosaccharomyces pombe (strain 972 / ATCC 24843) (Fission yeast), this protein is CTD kinase subunit alpha.